Here is a 194-residue protein sequence, read N- to C-terminus: dCTP deaminase (194 aa).

Residues 110–115, D128, 136–138, Y171, K178, and Q182 each bind dCTP; these read RSSLAR and VLE. E138 functions as the Proton donor/acceptor in the catalytic mechanism.

Belongs to the dCTP deaminase family. As to quaternary structure, homotrimer.

The enzyme catalyses dCTP + H2O + H(+) = dUTP + NH4(+). Its pathway is pyrimidine metabolism; dUMP biosynthesis; dUMP from dCTP (dUTP route): step 1/2. Its function is as follows. Catalyzes the deamination of dCTP to dUTP. The polypeptide is dCTP deaminase (Pasteurella multocida (strain Pm70)).